A 206-amino-acid polypeptide reads, in one-letter code: Superoxide dismutase [Mn] (206 aa).

The Mn(2+) site is built by His27, His82, Asp168, and His172.

The protein belongs to the iron/manganese superoxide dismutase family. As to quaternary structure, homodimer. It depends on Mn(2+) as a cofactor.

The enzyme catalyses 2 superoxide + 2 H(+) = H2O2 + O2. Destroys superoxide anion radicals which are normally produced within the cells and which are toxic to biological systems. The protein is Superoxide dismutase [Mn] (sodA) of Salmonella typhimurium (strain LT2 / SGSC1412 / ATCC 700720).